We begin with the raw amino-acid sequence, 215 residues long: MDSEKTGEAKITIQEPKAADPKGKGIADAPPPPVVVTTAKAIQKLPRGGWKKGVAIFDFVVRLCAIATGLAATGIMGTTEQTLPFFTQFFQFHAEYNDLPTFMFFVFANGIASGYLILSLPFSIVCIVRPLAIVPRLLLIIFDTVVMALTIAAASAAAAIVYLAHNGNSNANWNAICQQFNDFCQQTSTAVVASFITAAMLTFLIVLSAFALKRN.

Residues 1–26 (MDSEKTGEAKITIQEPKAADPKGKGI) form a disordered region. Residues 1-55 (MDSEKTGEAKITIQEPKAADPKGKGIADAPPPPVVVTTAKAIQKLPRGGWKKGVA) are Cytoplasmic-facing. A helical membrane pass occupies residues 56 to 76 (IFDFVVRLCAIATGLAATGIM). The Extracellular segment spans residues 77–101 (GTTEQTLPFFTQFFQFHAEYNDLPT). The helical transmembrane segment at 102–122 (FMFFVFANGIASGYLILSLPF) threads the bilayer. The Cytoplasmic segment spans residues 123–136 (SIVCIVRPLAIVPR). A helical transmembrane segment spans residues 137 to 157 (LLLIIFDTVVMALTIAAASAA). At 158-189 (AAIVYLAHNGNSNANWNAICQQFNDFCQQTST) the chain is on the extracellular side. Residues 190 to 210 (AVVASFITAAMLTFLIVLSAF) traverse the membrane as a helical segment. Over 211 to 215 (ALKRN) the chain is Cytoplasmic.

This sequence belongs to the Casparian strip membrane proteins (CASP) family. As to quaternary structure, homodimer and heterodimers.

It localises to the cell membrane. Its function is as follows. Regulates membrane-cell wall junctions and localized cell wall deposition. Required for establishment of the Casparian strip membrane domain (CSD) and the subsequent formation of Casparian strips, a cell wall modification of the root endodermis that determines an apoplastic barrier between the intraorganismal apoplasm and the extraorganismal apoplasm and prevents lateral diffusion. This chain is Casparian strip membrane protein 3, found in Ricinus communis (Castor bean).